A 374-amino-acid chain; its full sequence is Dispase autolysis-inducing protein (374 aa).

Positions 1–26 (MKRMGWAVTAAVTTIVLAQSSLAAQA) are cleaved as a signal peptide.

The protein resides in the secreted. Its function is as follows. Induces autolysis of dispase and thermolysin. The polypeptide is Dispase autolysis-inducing protein (daip) (Streptomyces mobaraensis (Streptoverticillium mobaraense)).